We begin with the raw amino-acid sequence, 41 residues long: U15-myrmicitoxin-Tb1b (41 aa).

A signal peptide spans Met1 to Ala25. Histidine amide is present on His40.

Expressed by the venom gland.

The protein resides in the secreted. Venom protein with unknown function. Does not induce paralysis when a high dose is administered by intrathoracic injection into the blowfly Lucilia caesar. The chain is U15-myrmicitoxin-Tb1b from Tetramorium bicarinatum (Tramp ant).